Consider the following 686-residue polypeptide: Methionine--tRNA ligase (686 aa).

The short motif at 15–25 is the 'HIGH' region element; the sequence is PYANGPIHLGH. Zn(2+) contacts are provided by C146, C149, C159, and C162. Positions 331 to 335 match the 'KMSKS' region motif; that stretch reads KMSKS. K334 provides a ligand contact to ATP. In terms of domain architecture, tRNA-binding spans 584-686; the sequence is DFAKIDLRVA…AGVKAGSRVM (103 aa).

This sequence belongs to the class-I aminoacyl-tRNA synthetase family. MetG type 1 subfamily. As to quaternary structure, homodimer. It depends on Zn(2+) as a cofactor.

It localises to the cytoplasm. It carries out the reaction tRNA(Met) + L-methionine + ATP = L-methionyl-tRNA(Met) + AMP + diphosphate. In terms of biological role, is required not only for elongation of protein synthesis but also for the initiation of all mRNA translation through initiator tRNA(fMet) aminoacylation. This chain is Methionine--tRNA ligase, found in Mannheimia succiniciproducens (strain KCTC 0769BP / MBEL55E).